Reading from the N-terminus, the 777-residue chain is Serine/threonine-protein kinase PLK4 (777 aa).

One can recognise a Protein kinase domain in the interval 14–268 (YEVQHLLGKG…LEQVLRHPFL (255 aa)). Residues 20 to 28 (LGKGGFASV) and K43 each bind ATP. Residue D139 is the Proton acceptor of the active site. The span at 371-381 (TNNLAPFTSDS) shows a compositional bias: polar residues. Residues 371 to 390 (TNNLAPFTSDSDMIPSPVGE) are disordered. The region spanning 390-507 (EKRLLMPPLE…ARFVGLVKSK (118 aa)) is the Cryptic POLO box 1 (CPB1) domain. One can recognise a Cryptic POLO box 2 (CPB2) domain in the interval 508 to 611 (TPKITFFSSL…GRRPAADMHA (104 aa)). A POLO box domain is found at 669 to 748 (PIKRITVPEI…MPQLQMKLKC (80 aa)).

The protein belongs to the protein kinase superfamily. Ser/Thr protein kinase family. CDC5/Polo subfamily. As to quaternary structure, homodimer. Post-translationally, ubiquitinated by the SCF(Slimb) ubiquitin ligase complex; leading to its degradation by the proteasome during interphase and regulating centriole number and ensuring the block to centriole reduplication.

The protein localises to the cytoplasm. Its subcellular location is the cytoskeleton. It is found in the microtubule organizing center. The protein resides in the centrosome. It localises to the centriole. It carries out the reaction L-seryl-[protein] + ATP = O-phospho-L-seryl-[protein] + ADP + H(+). The enzyme catalyses L-threonyl-[protein] + ATP = O-phospho-L-threonyl-[protein] + ADP + H(+). Its function is as follows. Serine/threonine-protein kinase that plays a central role in centriole duplication. Able to trigger procentriole formation on the surface of the mother centriole cylinder, using mother centriole as a platform, leading to the recruitment of centriole biogenesis proteins such as sas-6. When overexpressed, it is able to induce centrosome amplification through the simultaneous generation of multiple procentrioles adjoining each parental centriole during S phase. Centrosome amplification following overexpression can initiate tumorigenesis, highlighting the importance of centrosome regulation in cancers. This is Serine/threonine-protein kinase PLK4 (SAK) from Drosophila pseudoobscura pseudoobscura (Fruit fly).